The following is a 329-amino-acid chain: MVREKVKVSTRTLQWKCVESKRDSKRLYYGRFILSPLMKGQADTIGIAMRRALLGEIEGTCITRAKSENIPHDYSNIAGIQESVHEILMNLNEIVLRSNLYGTRNALICVQGPGYITARDIILPPAVEIIDNTQHIATLTEPIDLCIELKIERNRGYSLKMSNNFEDRSYPIDAVFMPVENANHSIHSYGNGNEKQEILFLEIWTNGSLTPKEALHQASRNLINLFIPFLHVEEETFYLENNQHQVTLPFFPFHNRLVNLRKKKKTKELAFQYIFIDQLELPPRIYNCLKKSNIHTLLDLLNNSQEDLIKIEHFHVEDVKKILDILEKK.

The segment at 1 to 233 (MVREKVKVST…NLFIPFLHVE (233 aa)) is alpha N-terminal domain (alpha-NTD). The interval 266 to 329 (TKELAFQYIF…KKILDILEKK (64 aa)) is alpha C-terminal domain (alpha-CTD).

This sequence belongs to the RNA polymerase alpha chain family. As to quaternary structure, in plastids the minimal PEP RNA polymerase catalytic core is composed of four subunits: alpha, beta, beta', and beta''. When a (nuclear-encoded) sigma factor is associated with the core the holoenzyme is formed, which can initiate transcription.

It localises to the plastid. It is found in the chloroplast. It carries out the reaction RNA(n) + a ribonucleoside 5'-triphosphate = RNA(n+1) + diphosphate. Functionally, DNA-dependent RNA polymerase catalyzes the transcription of DNA into RNA using the four ribonucleoside triphosphates as substrates. This Arabidopsis thaliana (Mouse-ear cress) protein is DNA-directed RNA polymerase subunit alpha.